Consider the following 81-residue polypeptide: RNA-binding protein Hfq (81 aa).

One can recognise a Sm domain in the interval 9–68; sequence DPFLNVLRRERVPVFIYLINGIKLQGEIESFDKFVILLRNTVNQMIYKHAISTIVPSRVV.

Belongs to the Hfq family. As to quaternary structure, homohexamer.

In terms of biological role, RNA chaperone that binds small regulatory RNA (sRNAs) and mRNAs to facilitate mRNA translational regulation in response to envelope stress, environmental stress and changes in metabolite concentrations. Also binds with high specificity to tRNAs. The polypeptide is RNA-binding protein Hfq (Blochmanniella pennsylvanica (strain BPEN)).